The primary structure comprises 176 residues: Large ribosomal subunit protein uL10 (176 aa).

The protein belongs to the universal ribosomal protein uL10 family. In terms of assembly, part of the ribosomal stalk of the 50S ribosomal subunit. The N-terminus interacts with L11 and the large rRNA to form the base of the stalk. The C-terminus forms an elongated spine to which L12 dimers bind in a sequential fashion forming a multimeric L10(L12)X complex.

Forms part of the ribosomal stalk, playing a central role in the interaction of the ribosome with GTP-bound translation factors. The chain is Large ribosomal subunit protein uL10 from Natranaerobius thermophilus (strain ATCC BAA-1301 / DSM 18059 / JW/NM-WN-LF).